A 211-amino-acid chain; its full sequence is Large ribosomal subunit protein uL3 (211 aa).

It belongs to the universal ribosomal protein uL3 family. As to quaternary structure, part of the 50S ribosomal subunit. Forms a cluster with proteins L14 and L19.

Functionally, one of the primary rRNA binding proteins, it binds directly near the 3'-end of the 23S rRNA, where it nucleates assembly of the 50S subunit. The chain is Large ribosomal subunit protein uL3 from Trichlorobacter lovleyi (strain ATCC BAA-1151 / DSM 17278 / SZ) (Geobacter lovleyi).